Here is a 76-residue protein sequence, read N- to C-terminus: MPHIDVKHFPRNLSEEEKKIVAEDLAAVLKKHFGSSNDSLSVAFNEIQPERWKDEVYDPIIKPHLDTLAKKPGYSY.

Pro-2 (proton acceptor; via imino nitrogen) is an active-site residue.

It belongs to the 4-oxalocrotonate tautomerase family. PptA subfamily. Homodimer.

It localises to the cytoplasm. The polypeptide is Tautomerase PptA (Pectobacterium atrosepticum (strain SCRI 1043 / ATCC BAA-672) (Erwinia carotovora subsp. atroseptica)).